The following is a 751-amino-acid chain: Glutamate carboxypeptidase 2 (751 aa).

The Cytoplasmic portion of the chain corresponds to 1 to 19 (MWNPLHETDSTSVAWRRPR). A Phosphoserine modification is found at Ser-10. Residues 20–43 (WLCAGALVLAAGLFVLGFLFGWFI) form a helical; Signal-anchor for type II membrane protein membrane-spanning segment. Residues 44-750 (KSPNEAANIS…QAAAGTLREV (707 aa)) lie on the Extracellular side of the membrane. N-linked (GlcNAc...) asparagine glycans are attached at residues Asn-51, Asn-77, Asn-122, Asn-141, Asn-154, and Asn-196. Arg-211 and Asn-258 together coordinate substrate. 2 residues coordinate Ca(2+): Thr-270 and Tyr-273. An NAALADase region spans residues 275 to 588 (ANEYAYRLQI…QVRGGIVFEL (314 aa)). A glycan (N-linked (GlcNAc...) asparagine) is linked at Asn-337. Zn(2+)-binding residues include His-378 and Asp-388. Residue Glu-425 coordinates substrate. Catalysis depends on Glu-425, which acts as the Nucleophile; for NAALADase activity. Zn(2+) is bound at residue Glu-426. Glu-434 and Glu-437 together coordinate Ca(2+). Asp-454 contributes to the Zn(2+) binding site. 2 N-linked (GlcNAc...) asparagine glycosylation sites follow: Asn-460 and Asn-477. Residues 518–519 (SG), Asn-520, 535–537 (RAR), Tyr-553, and 553–554 (YH) contribute to the substrate site. Residue His-554 participates in Zn(2+) binding. Asn-614 carries N-linked (GlcNAc...) asparagine glycosylation. Residue Ser-629 is the Charge relay system of the active site. Asn-639 and Asn-646 each carry an N-linked (GlcNAc...) asparagine glycan. Residues Asp-667 and His-690 each act as charge relay system in the active site. 700-701 (KY) is a substrate binding site.

The protein belongs to the peptidase M28 family. M28B subfamily. In terms of assembly, homodimer. The cofactor is Zn(2+). In terms of tissue distribution, high expression in the duodenum and in the jejunum brush-border membrane. Weak expression in kidney.

It localises to the cell membrane. The enzyme catalyses Release of an unsubstituted, C-terminal glutamyl residue, typically from Ac-Asp-Glu or folylpoly-gamma-glutamates.. The NAALADase activity is inhibited by quisqualic acid, beta-NAAG and 2-(phosphonomethyl) pentanedioic acid (PMPA). Ethanol ingestion decreases the folate hydrolase activity by 50%. Functionally, has both folate hydrolase and N-acetylated-alpha-linked-acidic dipeptidase (NAALADase) activity. Has a preference for tri-alpha-glutamate peptides. In the intestine, required for the uptake of folate. In the brain, modulates excitatory neurotransmission through the hydrolysis of the neuropeptide, N-aceylaspartylglutamate (NAAG), thereby releasing glutamate. Its function is as follows. Also exhibits a dipeptidyl-peptidase IV type activity. In vitro, cleaves Gly-Pro-AMC. The protein is Glutamate carboxypeptidase 2 (FOLH1) of Sus scrofa (Pig).